The sequence spans 119 residues: Flagellar transcriptional regulator FlhD (119 aa).

It belongs to the FlhD family. Homodimer; disulfide-linked. Forms a heterohexamer composed of two FlhC and four FlhD subunits. Each FlhC binds a FlhD dimer, forming a heterotrimer, and a hexamer assembles by dimerization of two heterotrimers.

It localises to the cytoplasm. In terms of biological role, functions in complex with FlhC as a master transcriptional regulator that regulates transcription of several flagellar and non-flagellar operons by binding to their promoter region. Activates expression of class 2 flagellar genes, including fliA, which is a flagellum-specific sigma factor that turns on the class 3 genes. Also regulates genes whose products function in a variety of physiological pathways. The chain is Flagellar transcriptional regulator FlhD from Shigella dysenteriae serotype 1 (strain Sd197).